The following is a 361-amino-acid chain: Molybdopterin synthase catalytic subunit (361 aa).

Substrate-binding positions include H101–R102, K117, and K124–E126.

This sequence belongs to the MoaE family. MOCS2B subfamily. In terms of assembly, heterotetramer; composed of 2 small (Mocs2A) and 2 large (Mocs2B) subunits.

It localises to the cytoplasm. The catalysed reaction is 2 [molybdopterin-synthase sulfur-carrier protein]-C-terminal-Gly-aminoethanethioate + cyclic pyranopterin phosphate + H2O = molybdopterin + 2 [molybdopterin-synthase sulfur-carrier protein]-C-terminal Gly-Gly + 2 H(+). It functions in the pathway cofactor biosynthesis; molybdopterin biosynthesis. Functionally, catalytic subunit of the molybdopterin synthase complex, a complex that catalyzes the conversion of precursor Z into molybdopterin. Acts by mediating the incorporation of 2 sulfur atoms from thiocarboxylated Mocs2A into precursor Z to generate a dithiolene group. The protein is Molybdopterin synthase catalytic subunit of Drosophila persimilis (Fruit fly).